The sequence spans 251 residues: 5'-nucleotidase SurE (251 aa).

A divalent metal cation contacts are provided by D8, D9, S39, and N91.

This sequence belongs to the SurE nucleotidase family. The cofactor is a divalent metal cation.

The protein localises to the cytoplasm. The catalysed reaction is a ribonucleoside 5'-phosphate + H2O = a ribonucleoside + phosphate. Nucleotidase that shows phosphatase activity on nucleoside 5'-monophosphates. The polypeptide is 5'-nucleotidase SurE (Thioalkalivibrio sulfidiphilus (strain HL-EbGR7)).